The primary structure comprises 298 residues: MDLVNHLPDRLLFAVPKKGRLYEKCCNLLSGADIQFRRSNRLDIALSTNLPIALIFLPAADIPVFVGEGNCDLGITGLDQIKEAEQFDNIEDLLDLKFGSCKLQIQVPADGEYEKPEQLVGKKIVSSFTKLSTDYFKQLSDKPTNIRYVGGSVEASCALGVADAIVDLVESGETMKAAGLKAIETILETSAHLISSKKSKFPEMVNIIVQRLQGVLAAQEYVLCNYNAPKSIQAKCLTITPGRRAATVSTLDKHSDDEEDWVAISSMVNRKEIGNVMDELKKAGATDILVLEISNCRV.

This sequence belongs to the ATP phosphoribosyltransferase family.

The protein localises to the cytoplasm. The enzyme catalyses 1-(5-phospho-beta-D-ribosyl)-ATP + diphosphate = 5-phospho-alpha-D-ribose 1-diphosphate + ATP. It functions in the pathway amino-acid biosynthesis; L-histidine biosynthesis; L-histidine from 5-phospho-alpha-D-ribose 1-diphosphate: step 1/9. Catalyzes the condensation of ATP and 5-phosphoribose 1-diphosphate to form N'-(5'-phosphoribosyl)-ATP (PR-ATP). Has a crucial role in the pathway because the rate of histidine biosynthesis seems to be controlled primarily by regulation of the enzymatic activity. This Candida albicans (strain SC5314 / ATCC MYA-2876) (Yeast) protein is ATP phosphoribosyltransferase (HIS1).